Reading from the N-terminus, the 625-residue chain is Adenine deaminase 2 (625 aa).

The protein belongs to the metallo-dependent hydrolases superfamily. Adenine deaminase family. The cofactor is Mn(2+).

The enzyme catalyses adenine + H2O + H(+) = hypoxanthine + NH4(+). This Bradyrhizobium diazoefficiens (strain JCM 10833 / BCRC 13528 / IAM 13628 / NBRC 14792 / USDA 110) protein is Adenine deaminase 2.